We begin with the raw amino-acid sequence, 322 residues long: Probable ATP-dependent 6-phosphofructokinase (322 aa).

Residues glycine 11, 72-73 (RF), and 102-105 (GDGS) each bind ATP. Aspartate 103 serves as a coordination point for Mg(2+). Substrate is bound by residues 125 to 127 (TID), 169 to 171 (MGR), glutamate 222, lysine 249, and 255 to 258 (YLQR). Aspartate 127 functions as the Proton acceptor in the catalytic mechanism.

It belongs to the phosphofructokinase type A (PFKA) family. As to quaternary structure, homotetramer. Requires Mg(2+) as cofactor.

Its subcellular location is the cytoplasm. The enzyme catalyses beta-D-fructose 6-phosphate + ATP = beta-D-fructose 1,6-bisphosphate + ADP + H(+). Its pathway is carbohydrate degradation; glycolysis; D-glyceraldehyde 3-phosphate and glycerone phosphate from D-glucose: step 3/4. Functionally, catalyzes the phosphorylation of D-fructose 6-phosphate to fructose 1,6-bisphosphate by ATP, the first committing step of glycolysis. The protein is Probable ATP-dependent 6-phosphofructokinase (pfkA) of Malacoplasma penetrans (strain HF-2) (Mycoplasma penetrans).